The following is a 1010-amino-acid chain: Protein translocase subunit SecA (1010 aa).

Residues Gln-86, 104–108, and Asp-535 each bind ATP; that span reads GEGKT. Positions 893–904 are enriched in low complexity; that stretch reads QAGAADGNAKGA. A disordered region spans residues 893–916; it reads QAGAADGNAKGARTVRHSVRLPGR. Cys-920, Cys-922, Cys-931, and His-932 together coordinate Zn(2+). Low complexity predominate over residues 950–981; it reads QHAAVAADTPAQPAPQATATRPPTSQVPRGRA. The interval 950–1010 is disordered; it reads QHAAVAADTP…RGKGASARKK (61 aa).

It belongs to the SecA family. In terms of assembly, monomer and homodimer. Part of the essential Sec protein translocation apparatus which comprises SecA, SecYEG and auxiliary proteins SecDF. Other proteins may also be involved. Requires Zn(2+) as cofactor.

It localises to the cell membrane. The protein resides in the cytoplasm. The enzyme catalyses ATP + H2O + cellular proteinSide 1 = ADP + phosphate + cellular proteinSide 2.. Functionally, part of the Sec protein translocase complex. Interacts with the SecYEG preprotein conducting channel. Has a central role in coupling the hydrolysis of ATP to the transfer of proteins into and across the cell membrane, serving as an ATP-driven molecular motor driving the stepwise translocation of polypeptide chains across the membrane. This Roseiflexus sp. (strain RS-1) protein is Protein translocase subunit SecA.